The chain runs to 439 residues: Cytochrome b-c1 complex reductase subunit, mitochondrial (439 aa).

The transit peptide at 1–17 directs the protein to the mitochondrion; sequence MIRGSSALKSLTSRRLY.

This sequence belongs to the peptidase M16 family. UQCRC1/QCR1 subfamily. As to quaternary structure, component of the ubiquinol-cytochrome c oxidoreductase (cytochrome b-c1 complex, complex III, CIII), a multisubunit enzyme composed of 10 subunits. The complex is composed of 3 respiratory subunits cytochrome b (COB), cytochrome c1 (CYT1) and Rieske protein (RIP1), 2 core protein subunits COR1 and QCR2, and 5 low-molecular weight protein subunits QCR6, QCR7, QCR8, QCR9 and QCR10. The complex exists as an obligatory dimer and forms supercomplexes (SCs) in the inner mitochondrial membrane with a monomer or a dimer of cytochrome c oxidase (complex IV, CIV), resulting in 2 different assemblies (supercomplexes III(2)IV and III(2)IV(2)).

The protein localises to the mitochondrion inner membrane. Functionally, component of the ubiquinol-cytochrome c oxidoreductase, a multisubunit transmembrane complex that is part of the mitochondrial electron transport chain which drives oxidative phosphorylation. The complex plays an important role in the uptake of multiple carbon sources present in different host niches. This chain is Cytochrome b-c1 complex reductase subunit, mitochondrial, found in Candida albicans (strain SC5314 / ATCC MYA-2876) (Yeast).